A 159-amino-acid chain; its full sequence is NAD(P)H-quinone oxidoreductase subunit J, chloroplastic (159 aa).

It belongs to the complex I 30 kDa subunit family. As to quaternary structure, NDH is composed of at least 16 different subunits, 5 of which are encoded in the nucleus.

It localises to the plastid. The protein localises to the chloroplast thylakoid membrane. It carries out the reaction a plastoquinone + NADH + (n+1) H(+)(in) = a plastoquinol + NAD(+) + n H(+)(out). The enzyme catalyses a plastoquinone + NADPH + (n+1) H(+)(in) = a plastoquinol + NADP(+) + n H(+)(out). Its function is as follows. NDH shuttles electrons from NAD(P)H:plastoquinone, via FMN and iron-sulfur (Fe-S) centers, to quinones in the photosynthetic chain and possibly in a chloroplast respiratory chain. The immediate electron acceptor for the enzyme in this species is believed to be plastoquinone. Couples the redox reaction to proton translocation, and thus conserves the redox energy in a proton gradient. This chain is NAD(P)H-quinone oxidoreductase subunit J, chloroplastic, found in Brachypodium distachyon (Purple false brome).